The sequence spans 227 residues: Transcriptional regulatory protein CpxR homolog (227 aa).

In terms of domain architecture, Response regulatory spans 3–115; it reads KLLLVDDDIE…ELIARIKAIL (113 aa). 4-aspartylphosphate is present on Asp51. Residues 128–227 constitute a DNA-binding region (ompR/PhoB-type); the sequence is VEILSFDGIT…LRGKGYALVT (100 aa).

Post-translationally, phosphorylated.

The protein localises to the cytoplasm. Its function is as follows. Member of a two-component regulatory system. This chain is Transcriptional regulatory protein CpxR homolog (cpxR), found in Haemophilus influenzae (strain ATCC 51907 / DSM 11121 / KW20 / Rd).